The sequence spans 265 residues: 4-hydroxy-tetrahydrodipicolinate reductase (265 aa).

Residues 7-12 (GASGRM), Asp33, 96-98 (GTT), and 120-123 (AANF) contribute to the NAD(+) site. Residue His153 is the Proton donor/acceptor of the active site. His154 lines the (S)-2,3,4,5-tetrahydrodipicolinate pocket. Lys157 functions as the Proton donor in the catalytic mechanism. 163–164 (GT) contacts (S)-2,3,4,5-tetrahydrodipicolinate.

The protein belongs to the DapB family.

Its subcellular location is the cytoplasm. It catalyses the reaction (S)-2,3,4,5-tetrahydrodipicolinate + NAD(+) + H2O = (2S,4S)-4-hydroxy-2,3,4,5-tetrahydrodipicolinate + NADH + H(+). It carries out the reaction (S)-2,3,4,5-tetrahydrodipicolinate + NADP(+) + H2O = (2S,4S)-4-hydroxy-2,3,4,5-tetrahydrodipicolinate + NADPH + H(+). It functions in the pathway amino-acid biosynthesis; L-lysine biosynthesis via DAP pathway; (S)-tetrahydrodipicolinate from L-aspartate: step 4/4. Its function is as follows. Catalyzes the conversion of 4-hydroxy-tetrahydrodipicolinate (HTPA) to tetrahydrodipicolinate. This is 4-hydroxy-tetrahydrodipicolinate reductase from Cupriavidus taiwanensis (strain DSM 17343 / BCRC 17206 / CCUG 44338 / CIP 107171 / LMG 19424 / R1) (Ralstonia taiwanensis (strain LMG 19424)).